The sequence spans 576 residues: Arginine--tRNA ligase (576 aa).

A 'HIGH' region motif is present at residues 132 to 142; sequence ANPTGPMHIGH.

It belongs to the class-I aminoacyl-tRNA synthetase family. As to quaternary structure, monomer.

It is found in the cytoplasm. The catalysed reaction is tRNA(Arg) + L-arginine + ATP = L-arginyl-tRNA(Arg) + AMP + diphosphate. This chain is Arginine--tRNA ligase, found in Ehrlichia ruminantium (strain Welgevonden).